The sequence spans 737 residues: 1,4-alpha-glucan branching enzyme GlgB (737 aa).

D419 functions as the Nucleophile in the catalytic mechanism. Catalysis depends on E472, which acts as the Proton donor.

The protein belongs to the glycosyl hydrolase 13 family. GlgB subfamily. Monomer.

It catalyses the reaction Transfers a segment of a (1-&gt;4)-alpha-D-glucan chain to a primary hydroxy group in a similar glucan chain.. The protein operates within glycan biosynthesis; glycogen biosynthesis. Functionally, catalyzes the formation of the alpha-1,6-glucosidic linkages in glycogen by scission of a 1,4-alpha-linked oligosaccharide from growing alpha-1,4-glucan chains and the subsequent attachment of the oligosaccharide to the alpha-1,6 position. This Cellvibrio japonicus (strain Ueda107) (Pseudomonas fluorescens subsp. cellulosa) protein is 1,4-alpha-glucan branching enzyme GlgB.